Consider the following 269-residue polypeptide: ATP synthase subunit gamma, mitochondrial (269 aa).

In terms of assembly, F-type ATP synthases have 2 components, the catalytic core F(1) and the membrane-embedded component F(0), linked together by a central stalk and a peripheral stalk. The central stalk, also called rotor shaft, is often seen as part of F(1). The peripheral stalk is seen as part of F(0). F(0) contains the membrane channel next to the rotor. F-type ATP synthases form dimers but each monomer functions independently in ATP generation. The dimer consists of 18 different polypeptides: ATP1 (subunit alpha, part of F(1), 3 molecules per monomer), ATP2 (subunit beta, part of F(1), 3 molecules per monomer), ATP3 (subunit gamma, part of the central stalk), ATP4 (subunit b, part of the peripheral stalk), ATP5/OSCP (subunit 5/OSCP, part of the peripheral stalk), ATP6 (subunit a, part of the peripheral stalk), ATP7 (subunit d, part of the peripheral stalk), ATP8 (subunit 8, part of the peripheral stalk), OLI1 (subunit c, part of the rotor, 10 molecules per monomer), ATP14 (subunit h, part of the peripheral stalk), ATP15 (subunit epsilon, part of the central stalk), ATP16 (subunit delta, part of the central stalk), ATP17 (subunit f, part of the peripheral stalk), ATP18 (subunit i/j, part of the peripheral stalk). Dimer-specific subunits are ATP19 (subunit k, at interface between monomers), ATP20 (subunit g, at interface between monomers), TIM11 (subunit e, at interface between monomers). Also contains subunit L.

Its subcellular location is the mitochondrion inner membrane. Functionally, mitochondrial membrane ATP synthase (F(1)F(0) ATP synthase or Complex V) produces ATP from ADP in the presence of a proton gradient across the membrane which is generated by electron transport complexes of the respiratory chain. F-type ATP synthases consist of two structural domains, F(1) - containing the extramembraneous catalytic core, and F(0) - containing the membrane proton channel, linked together by a central stalk and a peripheral stalk. During catalysis, ATP synthesis in the catalytic domain of F(1) is coupled via a rotary mechanism of the central stalk subunits to proton translocation. Part of the complex F(1) domain and the central stalk which is part of the complex rotary element. The gamma/ATP3 subunit protrudes into the catalytic domain formed of alpha/ATP1(3)beta/ATP2(3). Rotation of the central stalk against the surrounding alpha/ATP1(3)beta/ATP2(3) subunits leads to hydrolysis of ATP in three separate catalytic sites on the beta/ATP2 subunits. The polypeptide is ATP synthase subunit gamma, mitochondrial (Pichia angusta (Yeast)).